A 48-amino-acid polypeptide reads, in one-letter code: Photosystem II reaction center protein K (48 aa).

Residues 1–11 (MFPSTNQEVLA) constitute a propeptide that is removed on maturation. Residues 23–43 (IVDVLPIIPLLFLLLAFVWQA) form a helical membrane-spanning segment.

It belongs to the PsbK family. PSII is composed of 1 copy each of membrane proteins PsbA, PsbB, PsbC, PsbD, PsbE, PsbF, PsbH, PsbI, PsbJ, PsbK, PsbL, PsbM, PsbT, PsbY, PsbZ, Psb30/Ycf12, at least 3 peripheral proteins of the oxygen-evolving complex and a large number of cofactors. It forms dimeric complexes.

It is found in the plastid. It localises to the chloroplast thylakoid membrane. One of the components of the core complex of photosystem II (PSII). PSII is a light-driven water:plastoquinone oxidoreductase that uses light energy to abstract electrons from H(2)O, generating O(2) and a proton gradient subsequently used for ATP formation. It consists of a core antenna complex that captures photons, and an electron transfer chain that converts photonic excitation into a charge separation. The sequence is that of Photosystem II reaction center protein K from Euglena sanguinea.